A 287-amino-acid polypeptide reads, in one-letter code: MKRILLFLATNLAVVLVLSVVLNIVYAVTGMQPGSLSGLLVMAAVFGFGGAFISLLMSKSMALRSVGGVVIDTPRNEMEHWLLETVRRQANQAGIGMPTVAIYDAPDMNAFATGAKRDDSLVAVSTGLLHNMTRDEAEAVLAHEVSHIANGDMVTMTLMQGVVNTFVIFLSRFIANIVASRDSEEGEGSNMMVYFGVSMVLELVFGFLASFITMWYSRHREFHADAGAAQLVGKHKMIAALERLKMGQESHLEGSMMAFGITGKRSLSELMMTHPPLEKRIAALRNM.

The next 2 membrane-spanning stretches (helical) occupy residues 4–24 and 36–56; these read ILLF…VLNI and LSGL…ISLL. Histidine 143 is a binding site for Zn(2+). Residue glutamate 144 is part of the active site. Residue histidine 147 participates in Zn(2+) binding. The next 2 helical transmembrane spans lie at 158–178 and 192–212; these read LMQG…ANIV and MVYF…ASFI. Glutamate 221 contacts Zn(2+).

The protein belongs to the peptidase M48B family. Zn(2+) is required as a cofactor.

The protein resides in the cell inner membrane. This Vibrio cholerae serotype O1 (strain ATCC 39315 / El Tor Inaba N16961) protein is Protease HtpX.